The following is a 105-amino-acid chain: UPF0251 protein AF_0666 (105 aa).

The protein belongs to the UPF0251 family.

In Archaeoglobus fulgidus (strain ATCC 49558 / DSM 4304 / JCM 9628 / NBRC 100126 / VC-16), this protein is UPF0251 protein AF_0666.